Reading from the N-terminus, the 427-residue chain is Enolase (427 aa).

(2R)-2-phosphoglycerate is bound at residue Q163. E205 functions as the Proton donor in the catalytic mechanism. Positions 242, 285, and 312 each coordinate Mg(2+). 4 residues coordinate (2R)-2-phosphoglycerate: K337, R366, S367, and K388. Catalysis depends on K337, which acts as the Proton acceptor.

It belongs to the enolase family. The cofactor is Mg(2+).

Its subcellular location is the cytoplasm. It localises to the secreted. The protein localises to the cell surface. The enzyme catalyses (2R)-2-phosphoglycerate = phosphoenolpyruvate + H2O. Its pathway is carbohydrate degradation; glycolysis; pyruvate from D-glyceraldehyde 3-phosphate: step 4/5. In terms of biological role, catalyzes the reversible conversion of 2-phosphoglycerate (2-PG) into phosphoenolpyruvate (PEP). It is essential for the degradation of carbohydrates via glycolysis. This Azorhizobium caulinodans (strain ATCC 43989 / DSM 5975 / JCM 20966 / LMG 6465 / NBRC 14845 / NCIMB 13405 / ORS 571) protein is Enolase.